Here is a 557-residue protein sequence, read N- to C-terminus: Dihydroxy-acid dehydratase (557 aa).

Cys50 is a [2Fe-2S] cluster binding site. Residue Asp82 participates in Mg(2+) binding. Position 123 (Cys123) interacts with [2Fe-2S] cluster. Residues Asp124 and Lys125 each contribute to the Mg(2+) site. Position 125 is an N6-carboxylysine (Lys125). Cys195 is a binding site for [2Fe-2S] cluster. Glu447 provides a ligand contact to Mg(2+). Ser473 serves as the catalytic Proton acceptor.

This sequence belongs to the IlvD/Edd family. Homodimer. It depends on [2Fe-2S] cluster as a cofactor. Mg(2+) is required as a cofactor.

It catalyses the reaction (2R)-2,3-dihydroxy-3-methylbutanoate = 3-methyl-2-oxobutanoate + H2O. The enzyme catalyses (2R,3R)-2,3-dihydroxy-3-methylpentanoate = (S)-3-methyl-2-oxopentanoate + H2O. It participates in amino-acid biosynthesis; L-isoleucine biosynthesis; L-isoleucine from 2-oxobutanoate: step 3/4. The protein operates within amino-acid biosynthesis; L-valine biosynthesis; L-valine from pyruvate: step 3/4. In terms of biological role, functions in the biosynthesis of branched-chain amino acids. Catalyzes the dehydration of (2R,3R)-2,3-dihydroxy-3-methylpentanoate (2,3-dihydroxy-3-methylvalerate) into 2-oxo-3-methylpentanoate (2-oxo-3-methylvalerate) and of (2R)-2,3-dihydroxy-3-methylbutanoate (2,3-dihydroxyisovalerate) into 2-oxo-3-methylbutanoate (2-oxoisovalerate), the penultimate precursor to L-isoleucine and L-valine, respectively. This chain is Dihydroxy-acid dehydratase, found in Herminiimonas arsenicoxydans.